The sequence spans 313 residues: Testis-expressed protein 264 (313 aa).

Residues 1-6 lie on the Lumenal side of the membrane; sequence MSDLLL. The helical; Signal-anchor for type III membrane protein transmembrane segment at 7 to 31 threads the bilayer; the sequence is LGLIGGLTLLLLLTLLAFAGYSGLL. Residues 32-313 are Cytoplasmic-facing; it reads AGVEVSAGSP…EPTAPEKGKE (282 aa). Positions 193–313 are disordered; the sequence is PEMKETEWKW…EPTAPEKGKE (121 aa). Polar residues predominate over residues 219–247; the sequence is DTMSDTSSVSLEVSPGSRETSAATLSPGA. Residues serine 239 and serine 244 each carry the phosphoserine modification. The segment covering 251–263 has biased composition (basic and acidic residues); the sequence is GWDDGDTRSEHSY. Low complexity predominate over residues 264 to 273; the sequence is SESGASGSSF. Positions 273–276 match the LIR motif motif; that stretch reads FEEL.

As to quaternary structure, interacts (via the LIR motif) with ATG8 family proteins MAP1LC3A, MAP1LC3B, GABARAP and GABARAPL1. Interacts with VCP/p97; bridging VCP/p97 to covalent DNA-protein cross-links (DPCs). Interacts with TOP1 (when sumoylated).

The protein resides in the endoplasmic reticulum membrane. Its subcellular location is the cytoplasmic vesicle. It localises to the autophagosome. It is found in the cytoplasm. The protein localises to the cytosol. The protein resides in the nucleus. Its subcellular location is the chromosome. Its function is as follows. Major reticulophagy (also called ER-phagy) receptor that acts independently of other candidate reticulophagy receptors to remodel subdomains of the endoplasmic reticulum into autophagosomes upon nutrient stress, which then fuse with lysosomes for endoplasmic reticulum turnover. The ATG8-containing isolation membrane (IM) cradles a tubular segment of TEX264-positive ER near a three-way junction, allowing the formation of a synapse of 2 juxtaposed membranes with trans interaction between the TEX264 and ATG8 proteins. Expansion of the IM would extend the capture of ER, possibly through a 'zipper-like' process involving continued trans TEX264-ATG8 interactions, until poorly understood mechanisms lead to the fission of relevant membranes and, ultimately, autophagosomal membrane closure. Also involved in the repair of covalent DNA-protein cross-links (DPCs) during DNA synthesis: acts by bridging VCP/p97 to covalent DNA-protein cross-links (DPCs) and initiating resolution of DPCs by SPRTN. This is Testis-expressed protein 264 from Homo sapiens (Human).